Reading from the N-terminus, the 591-residue chain is MRSHYCGDVNKSHVGQEVTLVGWVNRSRDLGGVVFLDLRDREGLVQVVYDPDLPEVFNVASTLRAEFCVQVKGVVRARPDSQVNAQMKTGEIEVLGKELTIINSSEPLPLSLDNYQNNSEEQRLKYRYLDLRRPEMAQRLMFRAKVTSAVRRFLDSNGFLDIETPILTKATPEGARDYLVPSRTYKGQFFALPQSPQLFKQLLMMSGFDRYYQIVKCFRDEDLRADRQPEFTQIDIETSFMTSEQVMAKTEEMMRGLFLEMLNVDLGEFPRMTYNEAMRRFGSDKPDLRNPLELVDVADLLKNVEFAVFSGPANDEEGRVAALRIPGGASLSRKQIDDYTKFVGIYGAKGLAWMKLNDLTQGLEGIQSPVLKFLNEGIVNEIISRTGAQTGDIILFGADNAIVVAESMGALRLKAGEDFNLLEGQWRPLWVVDFPMFEKINGSFHAVHHPFTAPRGVTPQELEANPANRVSDAYDMVLNGCELGGGSVRIHNQEMQSAVFRILGITDEEAKEKFGFLLEALRYGTPPHAGLAFGLDRIIMLMTGASSIRDVMAFPKTTTAACPLTNAPGFANPQQLAELGISVVKAAKTED.

Glu173 contacts L-aspartate. An aspartate region spans residues 197–200; sequence QLFK. Residue Arg219 coordinates L-aspartate. Residues 219–221 and Gln228 contribute to the ATP site; that span reads RDE. Residue His448 participates in L-aspartate binding. Glu482 serves as a coordination point for ATP. Arg489 provides a ligand contact to L-aspartate. ATP is bound at residue 534–537; that stretch reads GLDR.

The protein belongs to the class-II aminoacyl-tRNA synthetase family. Type 1 subfamily. In terms of assembly, homodimer.

It localises to the cytoplasm. It carries out the reaction tRNA(Asp) + L-aspartate + ATP = L-aspartyl-tRNA(Asp) + AMP + diphosphate. Its function is as follows. Catalyzes the attachment of L-aspartate to tRNA(Asp) in a two-step reaction: L-aspartate is first activated by ATP to form Asp-AMP and then transferred to the acceptor end of tRNA(Asp). The polypeptide is Aspartate--tRNA ligase (Shewanella sp. (strain MR-7)).